The following is a 250-amino-acid chain: Leucyl/phenylalanyl-tRNA--protein transferase (250 aa).

Belongs to the L/F-transferase family.

Its subcellular location is the cytoplasm. The enzyme catalyses N-terminal L-lysyl-[protein] + L-leucyl-tRNA(Leu) = N-terminal L-leucyl-L-lysyl-[protein] + tRNA(Leu) + H(+). It catalyses the reaction N-terminal L-arginyl-[protein] + L-leucyl-tRNA(Leu) = N-terminal L-leucyl-L-arginyl-[protein] + tRNA(Leu) + H(+). The catalysed reaction is L-phenylalanyl-tRNA(Phe) + an N-terminal L-alpha-aminoacyl-[protein] = an N-terminal L-phenylalanyl-L-alpha-aminoacyl-[protein] + tRNA(Phe). Its function is as follows. Functions in the N-end rule pathway of protein degradation where it conjugates Leu, Phe and, less efficiently, Met from aminoacyl-tRNAs to the N-termini of proteins containing an N-terminal arginine or lysine. This chain is Leucyl/phenylalanyl-tRNA--protein transferase, found in Xanthomonas oryzae pv. oryzae (strain MAFF 311018).